We begin with the raw amino-acid sequence, 101 residues long: Putative pterin-4-alpha-carbinolamine dehydratase (101 aa).

The protein belongs to the pterin-4-alpha-carbinolamine dehydratase family.

It catalyses the reaction (4aS,6R)-4a-hydroxy-L-erythro-5,6,7,8-tetrahydrobiopterin = (6R)-L-erythro-6,7-dihydrobiopterin + H2O. The polypeptide is Putative pterin-4-alpha-carbinolamine dehydratase (Streptomyces coelicolor (strain ATCC BAA-471 / A3(2) / M145)).